The following is a 613-amino-acid chain: Forkhead box protein O (613 aa).

4 disordered regions span residues 39–90 (RARS…KNSS), 182–205 (KSVR…RAKK), 217–269 (GLND…RLSP), and 317–360 (QGFS…PASG). Thr-44 carries the post-translational modification Phosphothreonine; by PKB/AKT1. Positions 63-80 (TKASNQQLAPGDSQQAIQ) are enriched in polar residues. Ser-75 carries the phosphoserine modification. Residues 81-90 (NANAAKKNSS) show a composition bias toward low complexity. The fork-head DNA-binding region spans 95 to 201 (WGNLSYADLI…ETSRYEKRRG (107 aa)). The residue at position 190 (Ser-190) is a Phosphoserine; by PKB/AKT1. Polar residues-rich tracts occupy residues 221-230 (ATPSPSSSVS) and 256-265 (RASSNASSCG). Ser-259 bears the Phosphoserine; by PKB/AKT1 mark. 3 positions are modified to phosphoserine: Ser-262, Ser-263, and Ser-268. The span at 327–336 (SQPPPPPYQP) shows a compositional bias: pro residues. A compositionally biased stretch (low complexity) spans 337–353 (PQHQQAQQQQQQQSPYA).

As to quaternary structure, interacts with melt.

The protein resides in the cytoplasm. It localises to the nucleus. In terms of biological role, transcription factor involved in the regulation of the insulin signaling pathway. Consistently activates both the downstream target Thor\d4EBP and the feedback control target InR. Involved in negative regulation of the cell cycle, modulating cell growth and proliferation. In response to cellular stresses, such as nutrient deprivation or increased levels of reactive oxygen species, foxo is activated and inhibits growth through the action of target genes such as Thor. Foxo activated in the adult fat body can regulate lifespan in adults; an insulin peptide itself may function as one secondary messenger of insulin-regulated aging. Also regulates Lip4, homolog of human acid lipases, thereby acting as a key modulator of lipid metabolism by insulin signaling and integrates insulin responses to glucose and lipid homeostasis. The polypeptide is Forkhead box protein O (Drosophila melanogaster (Fruit fly)).